Reading from the N-terminus, the 160-residue chain is Cathelin-related peptide SC5 (160 aa).

Residues 1-29 (METQRASLSLGRRSLWLLLLGLVLASASA) form the signal peptide. The propeptide occupies 30–131 (QALSYREAVL…DITCAEPQSV (102 aa)). 2 cysteine pairs are disulfide-bonded: Cys-86/Cys-97 and Cys-108/Cys-125.

The protein belongs to the cathelicidin family.

Its subcellular location is the secreted. Functionally, broad spectrum bactericidal agent. This Ovis aries (Sheep) protein is Cathelin-related peptide SC5.